We begin with the raw amino-acid sequence, 256 residues long: MFKKLINKKNTINNYNEELDSSNIPEHIAIIMDGNGRWAKKRKMPRIKGHYEGMQTIKKITRIASDIGVKYLTLYAFSTENWSRPESEVNYIMNLPVNFLKTFLPELIEKNVKVETIGFTDKLPKSTIEAINNAKEKTANNTGLKLIFAINYGGRAELVHSIKNMFDELHQQGLNSDIIDETYINNHLMTKDYPDPELLIRTSGEQRISNFLIWQVSYSEFIFNQKLWPDFDEDELIKCIKIYQSRQRRFGGLSEE.

Residue Asp33 is part of the active site. Mg(2+) is bound at residue Asp33. Substrate is bound by residues 34 to 37 (GNGR), Trp38, Arg46, His50, and 78 to 80 (STE). Catalysis depends on Asn81, which acts as the Proton acceptor. Substrate contacts are provided by residues Trp82, Arg84, Arg201, and 207–209 (RIS). Glu220 is a Mg(2+) binding site.

This sequence belongs to the UPP synthase family. In terms of assembly, homodimer. Mg(2+) is required as a cofactor.

Catalyzes the condensation of isopentenyl diphosphate (IPP) with allylic pyrophosphates generating different type of terpenoids. This Staphylococcus aureus (strain Mu50 / ATCC 700699) protein is Isoprenyl transferase.